A 70-amino-acid polypeptide reads, in one-letter code: MSNNMAKIAEARKTVEQLKLEVNIDRMKVSQAAAELLAFCETHAKDDPLVTPVPAAENPFRDKRLFCVLL.

Cys67 carries the post-translational modification Cysteine methyl ester. A lipid anchor (S-geranylgeranyl cysteine) is attached at Cys67. Residues 68–70 (VLL) constitute a propeptide, removed in mature form.

Belongs to the G protein gamma family. G proteins are composed of 3 units, alpha, beta and gamma.

The protein localises to the cell membrane. In terms of biological role, guanine nucleotide-binding proteins (G proteins) are involved as a modulator or transducer in various transmembrane signaling systems. The beta and gamma chains are required for the GTPase activity, for replacement of GDP by GTP, and for G protein-effector interaction. The chain is Guanine nucleotide-binding protein G(I)/G(S)/G(O) subunit gamma-8 (GNG8) from Homo sapiens (Human).